We begin with the raw amino-acid sequence, 31 residues long: Photosystem II reaction center protein M (31 aa).

The chain crosses the membrane as a helical span at residues 5 to 25; sequence ILAFIATALLILVPTAFLLII.

This sequence belongs to the PsbM family. In terms of assembly, PSII is composed of 1 copy each of membrane proteins PsbA, PsbB, PsbC, PsbD, PsbE, PsbF, PsbH, PsbI, PsbJ, PsbK, PsbL, PsbM, PsbT, PsbX, PsbY, PsbZ, Psb30/Ycf12, at least 3 peripheral proteins of the oxygen-evolving complex and a large number of cofactors. It forms dimeric complexes.

The protein resides in the plastid membrane. Its function is as follows. One of the components of the core complex of photosystem II (PSII). PSII is a light-driven water:plastoquinone oxidoreductase that uses light energy to abstract electrons from H(2)O, generating O(2) and a proton gradient subsequently used for ATP formation. It consists of a core antenna complex that captures photons, and an electron transfer chain that converts photonic excitation into a charge separation. This subunit is found at the monomer-monomer interface. The protein is Photosystem II reaction center protein M of Cuscuta exaltata (Tall dodder).